The chain runs to 324 residues: Beta-ketoacyl-[acyl-carrier-protein] synthase III (324 aa).

Residues C114 and H251 contribute to the active site. The tract at residues 252–256 (QANQR) is ACP-binding. The active site involves N281.

It belongs to the thiolase-like superfamily. FabH family. Homodimer.

It is found in the cytoplasm. It carries out the reaction malonyl-[ACP] + acetyl-CoA + H(+) = 3-oxobutanoyl-[ACP] + CO2 + CoA. The protein operates within lipid metabolism; fatty acid biosynthesis. In terms of biological role, catalyzes the condensation reaction of fatty acid synthesis by the addition to an acyl acceptor of two carbons from malonyl-ACP. Catalyzes the first condensation reaction which initiates fatty acid synthesis and may therefore play a role in governing the total rate of fatty acid production. Possesses both acetoacetyl-ACP synthase and acetyl transacylase activities. Its substrate specificity determines the biosynthesis of branched-chain and/or straight-chain of fatty acids. The polypeptide is Beta-ketoacyl-[acyl-carrier-protein] synthase III (Rhodospirillum rubrum (strain ATCC 11170 / ATH 1.1.1 / DSM 467 / LMG 4362 / NCIMB 8255 / S1)).